Here is a 576-residue protein sequence, read N- to C-terminus: 2-succinyl-5-enolpyruvyl-6-hydroxy-3-cyclohexene-1-carboxylate synthase (576 aa).

It belongs to the TPP enzyme family. MenD subfamily. Homodimer. The cofactor is Mg(2+). It depends on Mn(2+) as a cofactor. Thiamine diphosphate is required as a cofactor.

It catalyses the reaction isochorismate + 2-oxoglutarate + H(+) = 5-enolpyruvoyl-6-hydroxy-2-succinyl-cyclohex-3-ene-1-carboxylate + CO2. It functions in the pathway quinol/quinone metabolism; 1,4-dihydroxy-2-naphthoate biosynthesis; 1,4-dihydroxy-2-naphthoate from chorismate: step 2/7. The protein operates within quinol/quinone metabolism; menaquinone biosynthesis. In terms of biological role, catalyzes the thiamine diphosphate-dependent decarboxylation of 2-oxoglutarate and the subsequent addition of the resulting succinic semialdehyde-thiamine pyrophosphate anion to isochorismate to yield 2-succinyl-5-enolpyruvyl-6-hydroxy-3-cyclohexene-1-carboxylate (SEPHCHC). The polypeptide is 2-succinyl-5-enolpyruvyl-6-hydroxy-3-cyclohexene-1-carboxylate synthase (Photobacterium profundum (strain SS9)).